We begin with the raw amino-acid sequence, 52 residues long: Alpha-1-antiproteinase 3 (52 aa).

The segment at 1-20 (EDLQGDAVPEEXATKDDNEH) is disordered.

It belongs to the serpin family. In terms of processing, N-glycosylated; contains glycans with bi- and triantennary side chains. As to expression, plasma.

It is found in the secreted. This is Alpha-1-antiproteinase 3 from Equus caballus (Horse).